The chain runs to 318 residues: NAD kinase (318 aa).

Asp80 serves as the catalytic Proton acceptor. NAD(+)-binding positions include 80-81, Arg85, 155-156, Asp185, and 196-201; these read DG, NE, and TAYAFS.

This sequence belongs to the NAD kinase family. A divalent metal cation serves as cofactor.

The protein localises to the cytoplasm. The catalysed reaction is NAD(+) + ATP = ADP + NADP(+) + H(+). Functionally, involved in the regulation of the intracellular balance of NAD and NADP, and is a key enzyme in the biosynthesis of NADP. Catalyzes specifically the phosphorylation on 2'-hydroxyl of the adenosine moiety of NAD to yield NADP. In Corynebacterium efficiens (strain DSM 44549 / YS-314 / AJ 12310 / JCM 11189 / NBRC 100395), this protein is NAD kinase.